The primary structure comprises 264 residues: Thymidylate synthase (264 aa).

DUMP-binding positions include R21 and 126–127 (RR). C146 (nucleophile) is an active-site residue. Residues 166-169 (RSAD), N177, and 207-209 (HLY) each bind dUMP. D169 contributes to the (6R)-5,10-methylene-5,6,7,8-tetrahydrofolate binding site. A (6R)-5,10-methylene-5,6,7,8-tetrahydrofolate-binding site is contributed by A263.

This sequence belongs to the thymidylate synthase family. Bacterial-type ThyA subfamily. In terms of assembly, homodimer.

The protein resides in the cytoplasm. The enzyme catalyses dUMP + (6R)-5,10-methylene-5,6,7,8-tetrahydrofolate = 7,8-dihydrofolate + dTMP. Its pathway is pyrimidine metabolism; dTTP biosynthesis. Functionally, catalyzes the reductive methylation of 2'-deoxyuridine-5'-monophosphate (dUMP) to 2'-deoxythymidine-5'-monophosphate (dTMP) while utilizing 5,10-methylenetetrahydrofolate (mTHF) as the methyl donor and reductant in the reaction, yielding dihydrofolate (DHF) as a by-product. This enzymatic reaction provides an intracellular de novo source of dTMP, an essential precursor for DNA biosynthesis. The protein is Thymidylate synthase of Rhodopseudomonas palustris (strain ATCC BAA-98 / CGA009).